Consider the following 109-residue polypeptide: ATPase inhibitor, mitochondrial (109 aa).

Residues 1–25 (MAATALAARTRQAVWSVWAMQGRGF) constitute a mitochondrion transit peptide. The segment at 26–52 (GSESGDNVRSSAGAVRDAGGAFGKREQ) is disordered. The segment at 26-52 (GSESGDNVRSSAGAVRDAGGAFGKREQ) is N-terminal inhibitory region. A coiled-coil region spans residues 69–109 (ALKKHHENEISHHAKEIERLQKEIERHKQSIKKLKQSEDDD). Residues 74–106 (HENEISHHAKEIERLQKEIERHKQSIKKLKQSE) are antiparallel alpha-helical coiled coil region. Lys103 carries the post-translational modification N6-succinyllysine.

The protein belongs to the ATPase inhibitor family. As to quaternary structure, homodimer; represents the active form and is present at a pH value below 6.5. Homotetramer; represents the inactive form and is present at a pH value above 7.0.

The protein localises to the mitochondrion. Functionally, endogenous F(1)F(o)-ATPase inhibitor limiting ATP depletion when the mitochondrial membrane potential falls below a threshold and the F(1)F(o)-ATP synthase starts hydrolyzing ATP to pump protons out of the mitochondrial matrix. Required to avoid the consumption of cellular ATP when the F(1)F(o)-ATP synthase enzyme acts as an ATP hydrolase. Indirectly acts as a regulator of heme synthesis in erythroid tissues: regulates heme synthesis by modulating the mitochondrial pH and redox potential, allowing FECH to efficiently catalyze the incorporation of iron into protoporphyrin IX to produce heme. The sequence is that of ATPase inhibitor, mitochondrial from Bos taurus (Bovine).